Here is a 281-residue protein sequence, read N- to C-terminus: Succinate dehydrogenase [ubiquinone] iron-sulfur subunit 1, mitochondrial (281 aa).

The N-terminal 25 residues, 1-25 (MAAAALLRRSPAARALLSPALSSRL), are a transit peptide targeting the mitochondrion. Residues 26–48 (VASKPHSSSPAPPPPPSKAGANT) form a disordered region. A 2Fe-2S ferredoxin-type domain is found at 49 to 141 (KTFSIYRWDP…ASTISPLPHM (93 aa)). [2Fe-2S] cluster contacts are provided by cysteine 102, cysteine 107, and cysteine 122. One can recognise a 4Fe-4S ferredoxin-type domain in the interval 184–214 (DRAKLDGMYECILCACCSTSCPSYWWNPEEY). Positions 194, 197, and 200 each coordinate [4Fe-4S] cluster. Cysteine 204 serves as a coordination point for [3Fe-4S] cluster. An a ubiquinone-binding site is contributed by tryptophan 209. Residues cysteine 251 and cysteine 257 each contribute to the [3Fe-4S] cluster site. Residue cysteine 261 participates in [4Fe-4S] cluster binding.

It belongs to the succinate dehydrogenase/fumarate reductase iron-sulfur protein family. Component of complex II composed of eight subunits in plants: four classical SDH subunits SDH1, SDH2, SDH3 and SDH4 (a flavoprotein (FP), an iron-sulfur protein (IP), and a cytochrome b composed of a large and a small subunit.), as well as four subunits unknown in mitochondria from bacteria and heterotrophic eukaryotes. It depends on [2Fe-2S] cluster as a cofactor. The cofactor is [3Fe-4S] cluster. [4Fe-4S] cluster is required as a cofactor.

It is found in the mitochondrion inner membrane. It catalyses the reaction a quinone + succinate = fumarate + a quinol. Its pathway is carbohydrate metabolism; tricarboxylic acid cycle; fumarate from succinate (eukaryal route): step 1/1. Functionally, iron-sulfur protein (IP) subunit of succinate dehydrogenase (SDH) that is involved in complex II of the mitochondrial electron transport chain and is responsible for transferring electrons from succinate to ubiquinone (coenzyme Q). This Oryza sativa subsp. japonica (Rice) protein is Succinate dehydrogenase [ubiquinone] iron-sulfur subunit 1, mitochondrial.